A 96-amino-acid chain; its full sequence is Small ribosomal subunit protein bS20 (96 aa).

This sequence belongs to the bacterial ribosomal protein bS20 family.

Functionally, binds directly to 16S ribosomal RNA. The protein is Small ribosomal subunit protein bS20 of Anaplasma marginale (strain St. Maries).